Reading from the N-terminus, the 1047-residue chain is Rab11 family-interacting protein 3 (1047 aa).

Disordered stretches follow at residues 1–107 (MELC…WPQE), 311–335 (SHSCPQEADTGCLSAKEPEEPDVSH), and 475–496 (PGPPSDPGPALSLPSEPGTAQE). A compositionally biased stretch (basic and acidic residues) spans 64 to 73 (EPHAPSRWAK). EF-hand domains are found at residues 496 to 531 (EEGARLRAVFDALDRDGDGFVRIEDFIQFATVYGAE) and 528 to 563 (YGAEQVKDLTQYLDPSGLGVISFEDFYQGIVAIRNG). Asp509, Asp511, Asp513, Asp520, Asp541, Ser543, and Asp552 together coordinate Ca(2+). Ser641, Ser765, and Ser829 each carry phosphoserine. Positions 750–985 (EEDIADKVIF…NGQIITLSIQ (236 aa)) form a coiled coil. An ARF-binding domain (ABD) region spans residues 775 to 879 (GEQHGRLRQE…MLDEIEELTQ (105 aa)). Residues 882 to 906 (SEEQENKRKMGDRLSHERHQFQRDK) are disordered. A phosphoserine mark is found at Ser938 and Ser939. One can recognise an FIP-RBD domain in the interval 985 to 1047 (QGAKSLFSTS…ETNPSILEVK (63 aa)).

In terms of assembly, homodimer. Interacts with RAB11A; the interaction is direct and is required for the recruitment to endosomes. Interacts with RAB11B. Forms a ternary complex with RAB11A and dynein intermediate chain DYNC1LI1; RAB11FIP3 links RAB11A to dynein and the interaction regulates endocytic trafficking. Interacts with dynein intermediate chain and dynactin (DCTN1); the interaction activates dynein processivity. Interacts with ARF6 and EXOC7; the interaction serves for recruitment and tethering of recycling endosomes-derived vesicles to the cleavage furrow/midbody. Interacts with RACGAP1/MgcRacGAP; the interaction occurs at late telophase and is required for recruitment and tethering of recycling endosomes-derived vesicles to the cleavage furrow/midbody. Forms a complex with RAB11A and Rabin8/RAB3IP, probably a heterohexamer with two of each protein subunit, where RAB3IP and RAB11FIP3 simultaneously bind to RAB11A; the complex promotes preciliary trafficking. Forms a complex containing RAB11A, ASAP1, RAB3IP, RAP11FIP3 and ARF4; the complex promotes preciliary trafficking; the complex binds to RHO in photoreceptor cells and promotes RHO ciliary transport. Interacts with RAB11FIP4. Interacts with RAB25.

The protein localises to the recycling endosome membrane. The protein resides in the cytoplasm. It localises to the cytoskeleton. Its subcellular location is the microtubule organizing center. It is found in the centrosome. The protein localises to the cleavage furrow. The protein resides in the midbody. It localises to the golgi apparatus membrane. Its subcellular location is the golgi apparatus. It is found in the trans-Golgi network membrane. Downstream effector molecule for Rab11 GTPase which is involved in endocytic trafficking, cytokinesis and intracellular ciliogenesis by participating in membrane delivery. Recruited by Rab11 to endosomes where it links Rab11 to dynein motor complex. The functional Rab11-RAB11FIP3-dynein complex regulates the movement of peripheral sorting endosomes (SE) along microtubule tracks toward the microtubule organizing center/centrosome, generating the endocytic recycling compartment (ERC) during interphase of cell cycle. Facilitates the interaction between dynein and dynactin and activates dynein processivity. Binding with ASAP1 is needed to regulate the pericentrosomal localization of recycling endosomes. The Rab11-RAB11FIP3 complex is also implicated in the transport during telophase of vesicles derived from recycling endosomes to the cleavage furrow via centrosome-anchored microtubules, where the vesicles function to deliver membrane during late cytokinesis and abscission. The recruitment of Rab11-RAB11FIP3-containing endosomes to the cleavage furrow and tethering to the midbody is co-mediated by RAB11FIP3 interaction with ARF6-exocyst and RACGAP1-MKLP1 tethering complexes. Also involved in the Rab11-Rabin8-Rab8 ciliogenesis cascade by facilitating the orderly assembly of a ciliary targeting complex containing Rab11, ASAP1, Rabin8/RAB3IP, RAB11FIP3 and ARF4, which directs preciliary vesicle trafficking to mother centriole and ciliogenesis initiation. Also promotes the activity of Rab11 and ASAP1 in the ARF4-dependent Golgi-to-cilia transport of the sensory receptor rhodopsin. Competes with WDR44 for binding to Rab11, which controls intracellular ciliogenesis pathway. May play a role in breast cancer cell motility by regulating actin cytoskeleton. The polypeptide is Rab11 family-interacting protein 3 (Mus musculus (Mouse)).